The primary structure comprises 1161 residues: Perforin-like protein 1 (1161 aa).

A helical transmembrane segment spans residues 67 to 86 (LWITFVCLLTLHMFGLSSAV). Residues 154 to 329 (PEALNEVPTK…LGDSSALDLF (176 aa)) form a disordered region. Composition is skewed to basic and acidic residues over residues 162 to 177 (TKVE…DKTE) and 184 to 194 (ADHKSLLEGRS). The segment covering 201–211 (PDDDFDFLFED) has biased composition (acidic residues). The segment covering 222–234 (NKGTSSDETSPGD) has biased composition (polar residues). Positions 238–249 (GEGSSASDSLLS) are enriched in low complexity. N-linked (GlcNAc...) asparagine glycosylation is present at Asn-257. Residues 264 to 283 (NQKRITHPKSKAQHQKKVTK) show a composition bias toward basic residues. The segment covering 309–322 (NTQADDSQRQSLGD) has biased composition (polar residues). Residue Asn-344 is glycosylated (N-linked (GlcNAc...) asparagine). Residues 353 to 381 (AANDGGLFSSSGMGPTGASDETSANPLGS) form a disordered region. The segment covering 361-378 (SSSGMGPTGASDETSANP) has biased composition (polar residues). Residues 463-817 (LSAVYTKATK…LTPQDLSALT (355 aa)) form the MACPF domain. Cysteines 539 and 602 form a disulfide. The N-linked (GlcNAc...) asparagine glycan is linked to Asn-550. The beta stranded transmembrane segment at 554–589 (YQNELSVDASLQGGDPIGLNSFSASTGYRDFAKEVS) threads the bilayer. Asn-618 carries an N-linked (GlcNAc...) asparagine glycan. Residues Cys-643 and Cys-657 are joined by a disulfide bond. The beta stranded transmembrane segment at 694-740 (RSEVEKMRNMGIDVKTQLKMQLGGVSGGAGQGTSSKKNQSSSEYQMN) threads the bilayer. The segment at 716 to 736 (GGVSGGAGQGTSSKKNQSSSE) is disordered. Residue Asn-755 is glycosylated (N-linked (GlcNAc...) asparagine). 6 disulfide bridges follow: Cys-845–Cys-900, Cys-874–Cys-881, Cys-928–Cys-981, Cys-957–Cys-964, Cys-1019–Cys-1080, and Cys-1047–Cys-1054. Asn-1022, Asn-1050, and Asn-1111 each carry an N-linked (GlcNAc...) asparagine glycan. Residues 1094 to 1149 (VGKAKGNGKKKKGKKGKNKTNAPNEVEEGQQLGADSPSQVSVPADADSGPTSKTMS) are disordered. Basic residues predominate over residues 1099 to 1111 (GNGKKKKGKKGKN).

It belongs to the MPEG1 family. As to quaternary structure, homooligomer; forms a homooligomeric pore.

Its subcellular location is the parasitophorous vacuole membrane. The protein localises to the cytoplasmic vesicle. The protein resides in the secretory vesicle. It localises to the microneme membrane. Pore-forming protein that promotes parasite exit from host cells: mediates formation of a pore in the parasitophorous vacuolar membrane, leading to membrane permeabilization, thereby facilitating parasite egress from host cells. May also form a pore in the host plasma membrane. Preferentially binds inner leaflet lipids, such as phosphatidylethanolamine (PE) or phosphatidylserine (PS). The protein is Perforin-like protein 1 of Toxoplasma gondii (strain ATCC 50861 / VEG).